The sequence spans 578 residues: Proline--tRNA ligase (578 aa).

The protein belongs to the class-II aminoacyl-tRNA synthetase family. ProS type 1 subfamily. As to quaternary structure, homodimer.

Its subcellular location is the cytoplasm. The enzyme catalyses tRNA(Pro) + L-proline + ATP = L-prolyl-tRNA(Pro) + AMP + diphosphate. Catalyzes the attachment of proline to tRNA(Pro) in a two-step reaction: proline is first activated by ATP to form Pro-AMP and then transferred to the acceptor end of tRNA(Pro). As ProRS can inadvertently accommodate and process non-cognate amino acids such as alanine and cysteine, to avoid such errors it has two additional distinct editing activities against alanine. One activity is designated as 'pretransfer' editing and involves the tRNA(Pro)-independent hydrolysis of activated Ala-AMP. The other activity is designated 'posttransfer' editing and involves deacylation of mischarged Ala-tRNA(Pro). The misacylated Cys-tRNA(Pro) is not edited by ProRS. This chain is Proline--tRNA ligase, found in Burkholderia ambifaria (strain MC40-6).